We begin with the raw amino-acid sequence, 611 residues long: Vitamin B12 transporter BtuB (611 aa).

The first 22 residues, 1-22 (MQKSALAIALASLLTPISYLHA), serve as a signal peptide directing secretion. Positions 29–36 (ETVVVTAN) match the TonB box motif. Positions 41–154 (KASSTLADVE…IGGVINIITK (114 aa)) constitute a TBDR plug domain. The TBDR beta-barrel domain occupies 159-611 (QQGTTVSAGL…AYYLNIGYQF (453 aa)). The TonB C-terminal box motif lies at 594-611 (NGYPAAERAYYLNIGYQF).

This sequence belongs to the TonB-dependent receptor family. BtuB (TC 1.B.14.3.1) subfamily.

Its subcellular location is the cell outer membrane. Involved in the active translocation of vitamin B12 (cyanocobalamin) across the outer membrane to the periplasmic space. It derives its energy for transport by interacting with the trans-periplasmic membrane protein TonB. The protein is Vitamin B12 transporter BtuB of Vibrio cholerae serotype O1 (strain ATCC 39541 / Classical Ogawa 395 / O395).